The following is an 81-amino-acid chain: Photosystem I iron-sulfur center (81 aa).

2 consecutive 4Fe-4S ferredoxin-type domains span residues 2 to 31 (SHAV…MVPW) and 39 to 68 (IASS…IRVY). Residues C11, C14, C17, C21, C48, C51, C54, and C58 each coordinate [4Fe-4S] cluster.

The cyanobacterial PSI reaction center is composed of one copy each of PsaA,B,C,D,E,F,I,J,K,L,M and X, and forms trimeric complexes. [4Fe-4S] cluster is required as a cofactor.

It localises to the cellular thylakoid membrane. The catalysed reaction is reduced [plastocyanin] + hnu + oxidized [2Fe-2S]-[ferredoxin] = oxidized [plastocyanin] + reduced [2Fe-2S]-[ferredoxin]. In terms of biological role, apoprotein for the two 4Fe-4S centers FA and FB of photosystem I (PSI); essential for photochemical activity. FB is the terminal electron acceptor of PSI, donating electrons to ferredoxin. The C-terminus interacts with PsaA/B/D and helps assemble the protein into the PSI complex. Required for binding of PsaD and PsaE to PSI. PSI is a plastocyanin/cytochrome c6-ferredoxin oxidoreductase, converting photonic excitation into a charge separation, which transfers an electron from the donor P700 chlorophyll pair to the spectroscopically characterized acceptors A0, A1, FX, FA and FB in turn. The sequence is that of Photosystem I iron-sulfur center from Prochlorococcus marinus (strain MIT 9312).